Reading from the N-terminus, the 156-residue chain is Small ribosomal subunit protein uS7 (156 aa).

This sequence belongs to the universal ribosomal protein uS7 family. As to quaternary structure, part of the 30S ribosomal subunit. Contacts proteins S9 and S11.

Its function is as follows. One of the primary rRNA binding proteins, it binds directly to 16S rRNA where it nucleates assembly of the head domain of the 30S subunit. Is located at the subunit interface close to the decoding center, probably blocks exit of the E-site tRNA. In Pseudarthrobacter chlorophenolicus (strain ATCC 700700 / DSM 12829 / CIP 107037 / JCM 12360 / KCTC 9906 / NCIMB 13794 / A6) (Arthrobacter chlorophenolicus), this protein is Small ribosomal subunit protein uS7.